Here is a 547-residue protein sequence, read N- to C-terminus: Dihydrolipoyllysine-residue acetyltransferase component of pyruvate dehydrogenase complex (547 aa).

A Lipoyl-binding 1 domain is found at 2–75; sequence SELIRVPDIG…KEGDEILELE (74 aa). An N6-lipoyllysine modification is found at Lys-41. A disordered region spans residues 75–117; sequence EVEGGEQPAEAKAEAAPAQPEAPKAEAPAPAPSESKPAAPAAA. A compositionally biased stretch (low complexity) spans 80-117; it reads EQPAEAKAEAAPAQPEAPKAEAPAPAPSESKPAAPAAA. A Lipoyl-binding 2 domain is found at 119–193; sequence VQDIKVPDIG…GTGDLILKLK (75 aa). An N6-lipoyllysine modification is found at Lys-159. A compositionally biased stretch (low complexity) spans 202-231; the sequence is EEQPAAAPAQAAAPAAEQKPAAAAPAPAKA. A disordered region spans residues 202 to 248; it reads EEQPAAAPAQAAAPAAEQKPAAAAPAPAKADTPAPVGAPSRDGAKVH. In terms of domain architecture, Peripheral subunit-binding (PSBD) spans 248–285; that stretch reads HAGPAVRMLAREFGVELSEVKASGPKGRILKEDVQVFV. Residue His-520 is part of the active site.

This sequence belongs to the 2-oxoacid dehydrogenase family. As to quaternary structure, forms a 24-polypeptide structural core with octahedral symmetry. (R)-lipoate serves as cofactor.

It catalyses the reaction N(6)-[(R)-dihydrolipoyl]-L-lysyl-[protein] + acetyl-CoA = N(6)-[(R)-S(8)-acetyldihydrolipoyl]-L-lysyl-[protein] + CoA. Its function is as follows. The pyruvate dehydrogenase complex catalyzes the overall conversion of pyruvate to acetyl-CoA and CO(2). It contains multiple copies of three enzymatic components: pyruvate dehydrogenase (E1), dihydrolipoamide acetyltransferase (E2) and lipoamide dehydrogenase (E3). The polypeptide is Dihydrolipoyllysine-residue acetyltransferase component of pyruvate dehydrogenase complex (aceF) (Pseudomonas aeruginosa (strain ATCC 15692 / DSM 22644 / CIP 104116 / JCM 14847 / LMG 12228 / 1C / PRS 101 / PAO1)).